Here is a 73-residue protein sequence, read N- to C-terminus: Small ribosomal subunit protein bS18 (73 aa).

This sequence belongs to the bacterial ribosomal protein bS18 family. As to quaternary structure, part of the 30S ribosomal subunit. Forms a tight heterodimer with protein bS6.

Its function is as follows. Binds as a heterodimer with protein bS6 to the central domain of the 16S rRNA, where it helps stabilize the platform of the 30S subunit. This chain is Small ribosomal subunit protein bS18, found in Prochlorococcus marinus (strain MIT 9313).